The chain runs to 86 residues: Allergen Hum j 3 (86 aa).

The chain is Allergen Hum j 3 from Humulus japonicus (Japanese hop).